The sequence spans 122 residues: Large ribosomal subunit protein bL12 (122 aa).

It belongs to the bacterial ribosomal protein bL12 family. In terms of assembly, homodimer. Part of the ribosomal stalk of the 50S ribosomal subunit. Forms a multimeric L10(L12)X complex, where L10 forms an elongated spine to which 2 to 4 L12 dimers bind in a sequential fashion. Binds GTP-bound translation factors.

Functionally, forms part of the ribosomal stalk which helps the ribosome interact with GTP-bound translation factors. Is thus essential for accurate translation. This Dichelobacter nodosus (strain VCS1703A) protein is Large ribosomal subunit protein bL12.